The primary structure comprises 137 residues: NADH-ubiquinone oxidoreductase chain 3 (137 aa).

3 helical membrane passes run Leu-6–Ala-26, Phe-57–Phe-77, and Ile-86–Glu-106.

Belongs to the complex I subunit 3 family.

The protein localises to the mitochondrion membrane. The enzyme catalyses a ubiquinone + NADH + 5 H(+)(in) = a ubiquinol + NAD(+) + 4 H(+)(out). Core subunit of the mitochondrial membrane respiratory chain NADH dehydrogenase (Complex I) that is believed to belong to the minimal assembly required for catalysis. Complex I functions in the transfer of electrons from NADH to the respiratory chain. The immediate electron acceptor for the enzyme is believed to be ubiquinone. This chain is NADH-ubiquinone oxidoreductase chain 3 (ND3), found in Podospora anserina (strain S / ATCC MYA-4624 / DSM 980 / FGSC 10383) (Pleurage anserina).